Consider the following 430-residue polypeptide: tRNA(Ile)-lysidine synthase (430 aa).

Position 21-26 (21-26) interacts with ATP; that stretch reads SGGLDS.

It belongs to the tRNA(Ile)-lysidine synthase family.

It is found in the cytoplasm. The enzyme catalyses cytidine(34) in tRNA(Ile2) + L-lysine + ATP = lysidine(34) in tRNA(Ile2) + AMP + diphosphate + H(+). Its function is as follows. Ligates lysine onto the cytidine present at position 34 of the AUA codon-specific tRNA(Ile) that contains the anticodon CAU, in an ATP-dependent manner. Cytidine is converted to lysidine, thus changing the amino acid specificity of the tRNA from methionine to isoleucine. The sequence is that of tRNA(Ile)-lysidine synthase from Salmonella typhi.